The sequence spans 921 residues: Dual serine/threonine and tyrosine protein kinase (921 aa).

Residues 645–899 (PKLGRELGRG…PLLGIVEPSL (255 aa)) enclose the Protein kinase domain. ATP-binding positions include 651–659 (LGRGQYGVV) and lysine 674. The Proton acceptor role is filled by aspartate 770.

The protein belongs to the protein kinase superfamily. Ser/Thr protein kinase family.

It localises to the cytoplasm. The protein resides in the cell membrane. The protein localises to the apical cell membrane. Its subcellular location is the basolateral cell membrane. It is found in the cell junction. The enzyme catalyses L-seryl-[protein] + ATP = O-phospho-L-seryl-[protein] + ADP + H(+). It catalyses the reaction L-threonyl-[protein] + ATP = O-phospho-L-threonyl-[protein] + ADP + H(+). It carries out the reaction L-tyrosyl-[protein] + ATP = O-phospho-L-tyrosyl-[protein] + ADP + H(+). Functionally, may act as a positive regulator of ERK phosphorylation downstream of fibroblast growth factor-receptor activation. May induce both caspase-dependent apoptosis and caspase-independent cell death. May play a role in the embryonic development. The sequence is that of Dual serine/threonine and tyrosine protein kinase (dstyk) from Takifugu rubripes (Japanese pufferfish).